Reading from the N-terminus, the 299-residue chain is Putative peptidyl-prolyl cis-trans isomerase jhp_0161 (299 aa).

The N-terminal stretch at 1–21 (MKKNILNLALVGALSASFLMA) is a signal peptide. The PpiC domain maps to 154 to 253 (KQEAHARHIL…FGYHIIYLIS (100 aa)).

It carries out the reaction [protein]-peptidylproline (omega=180) = [protein]-peptidylproline (omega=0). This is Putative peptidyl-prolyl cis-trans isomerase jhp_0161 from Helicobacter pylori (strain J99 / ATCC 700824) (Campylobacter pylori J99).